Here is a 527-residue protein sequence, read N- to C-terminus: Sensory neuron membrane protein 1 (527 aa).

Topologically, residues 1–10 are cytoplasmic; it reads MQLQKPLKIG. Residues 11 to 31 traverse the membrane as a helical segment; sequence LGMMGAGLFGIIFGWVLFPVI. Residues 32-456 lie on the Extracellular side of the membrane; sequence LKSQLKKEMA…LKNQLFIPKR (425 aa). Residues Asn-67 and Asn-229 are each glycosylated (N-linked (GlcNAc...) asparagine). 3 disulfides stabilise this stretch: Cys-268–Cys-333, Cys-297–Cys-352, and Cys-335–Cys-341. A glycan (N-linked (GlcNAc...) asparagine) is linked at Asn-440. A helical transmembrane segment spans residues 457–477; that stretch reads IVSVVKWLLAGVGFVGLVGSL. The Cytoplasmic segment spans residues 478 to 527; the sequence is VYQFKGKMINFALSPSSAPVTKVNPEINQQNQPKDISIIGESQNPPKVDM.

This sequence belongs to the CD36 family. In terms of tissue distribution, principal component of the olfactory cilia membrane. Localizes to the antennal tissue with two to three fold higher expression in males compared to females.

It is found in the cell membrane. Functionally, plays an olfactory role that is not restricted to pheromone sensitivity. The polypeptide is Sensory neuron membrane protein 1 (Ostrinia nubilalis (European corn borer)).